A 507-amino-acid chain; its full sequence is F-box only protein 31 (507 aa).

Residues 19-42 (RQQRRGPAETAAADSEADTDPEEE) are disordered. Position 33 is a phosphoserine (Ser33). Residues 33–42 (SEADTDPEEE) show a composition bias toward acidic residues. The residue at position 37 (Thr37) is a Phosphothreonine. The D box motif lies at 50–55 (RCSLLE). Residues 50-96 (RCSLLELPPELLVEIFASLPGTDLPSLAQVCSRFRRILHTDTIWRRR) enclose the F-box domain. The Zn(2+) site is built by Cys192, His200, Cys216, and His222. Ser264 is modified (phosphoserine; by ATM). Residues 283–285 (DDL) carry the DDL motif motif. Positions 364-421 (RQEQEAGEGPAPHREPAVKDPEGPPAKASKEAGPGAEAAEQSSTSGQGQPFVLPAGVS) are disordered. The segment covering 374–385 (APHREPAVKDPE) has biased composition (basic and acidic residues). Phosphoserine is present on Ser448.

Belongs to the FBXO31 family. As to quaternary structure, part of a SCF (SKP1-cullin-F-box) protein ligase complex SCF(FBXO31) composed of CUL1, SKP1, RBX1 and FBXO31. Interacts (when phosphorylated at Ser-33) with CDC20, promoting ubiquitination by the APC/C complex. In terms of processing, phosphorylation at Ser-264 by ATM following gamma-irradiation results in its stabilization. Phosphorylation at Ser-448 in absence of stress promotes its ubiquitination and degradation by the SCF(FBXO46) complex. Phosphorylation at Ser-33 by AKT1 promotes association with CDC20 and ubiquitination by the APC/C complex. Ubiquitinated by the SCF(FBXO46) complex in absence of stress, promoting its degradation. Ubiquitinated by the APC/C complex following phosphorylation at Ser-33, leading to its degradation by the proteasome.

The protein resides in the cytoplasm. It is found in the cytoskeleton. The protein localises to the microtubule organizing center. Its subcellular location is the centrosome. The protein operates within protein modification; protein ubiquitination. Substrate-recognition component of the SCF(FBXO31) protein ligase complex, which specifically mediates the ubiquitination of proteins amidated at their C-terminus in response to oxidative stress, leading to their degradation by the proteasome. FBXO31 specifically recognizes and binds C-terminal peptides bearing an amide: C-terminal amidation in response to oxidative stress takes place following protein fragmentation. The SCF(FBXO31) also plays a role in G1 arrest following DNA damage by mediating ubiquitination of phosphorylated cyclin-D1 (CCND1), promoting its degradation by the proteasome, resulting in G1 arrest. The SCF(FBXO31) complex is however not a major regulator of CCND1 stability during the G1/S transition. In response to genotoxic stress, the SCF(FBXO31) complex directs ubiquitination and degradation of phosphorylated MDM2, thereby promoting p53/TP53-mediated DNA damage response. SCF(FBXO31) complex is required for genomic integrity by catalyzing ubiquitination and degradation of cyclin-A (CCNA1 and/or CCNA2) during the G1 phase. In response to genotoxic stress, the SCF(FBXO31) complex directs ubiquitination and degradation of phosphorylated FBXO46 and MAP2K6. SCF(FBXO31) complex promotes ubiquitination and degradation of CDT1 during the G2 phase to prevent re-replication. The SCF(FBXO31) complex also mediates ubiquitination and degradation of DUSP6, OGT and PARD6A. This is F-box only protein 31 from Rattus norvegicus (Rat).